Here is a 181-residue protein sequence, read N- to C-terminus: 6,7-dimethyl-8-ribityllumazine synthase (181 aa).

5-amino-6-(D-ribitylamino)uracil contacts are provided by residues Tyr27, 58–60, and 87–89; these read ALE and CVI. Position 92 to 93 (92 to 93) interacts with (2S)-2-hydroxy-3-oxobutyl phosphate; it reads ET. His95 (proton donor) is an active-site residue. 5-amino-6-(D-ribitylamino)uracil is bound at residue Asn120. Arg134 serves as a coordination point for (2S)-2-hydroxy-3-oxobutyl phosphate.

It belongs to the DMRL synthase family.

It catalyses the reaction (2S)-2-hydroxy-3-oxobutyl phosphate + 5-amino-6-(D-ribitylamino)uracil = 6,7-dimethyl-8-(1-D-ribityl)lumazine + phosphate + 2 H2O + H(+). The protein operates within cofactor biosynthesis; riboflavin biosynthesis; riboflavin from 2-hydroxy-3-oxobutyl phosphate and 5-amino-6-(D-ribitylamino)uracil: step 1/2. Its function is as follows. Catalyzes the formation of 6,7-dimethyl-8-ribityllumazine by condensation of 5-amino-6-(D-ribitylamino)uracil with 3,4-dihydroxy-2-butanone 4-phosphate. This is the penultimate step in the biosynthesis of riboflavin. This is 6,7-dimethyl-8-ribityllumazine synthase from Methylobacterium sp. (strain 4-46).